Reading from the N-terminus, the 511-residue chain is V-type proton ATPase subunit B, brain isoform (511 aa).

Residue Arg-400 participates in ATP binding.

It belongs to the ATPase alpha/beta chains family. As to quaternary structure, V-ATPase is a heteromultimeric enzyme made up of two complexes: the ATP-hydrolytic V1 complex and the proton translocation V0 complex. The V1 complex consists of three catalytic AB heterodimers that form a heterohexamer, three peripheral stalks each consisting of EG heterodimers, one central rotor including subunits D and F, and the regulatory subunits C and H. The proton translocation complex V0 consists of the proton transport subunit a, a ring of proteolipid subunits c9c'', rotary subunit d, subunits e and f, and the accessory subunits ATP6AP1/Ac45 and ATP6AP2/PRR. As to expression, expressed in brain (at protein level). Expressed in all tissues tested, but highest in brain and in adrenal medulla.

It is found in the apical cell membrane. The protein resides in the melanosome. It localises to the cytoplasm. The protein localises to the cytoplasmic vesicle. Its subcellular location is the clathrin-coated vesicle membrane. It is found in the secretory vesicle. The protein resides in the synaptic vesicle membrane. Its function is as follows. Non-catalytic subunit of the V1 complex of vacuolar(H+)-ATPase (V-ATPase), a multisubunit enzyme composed of a peripheral complex (V1) that hydrolyzes ATP and a membrane integral complex (V0) that translocates protons. V-ATPase is responsible for acidifying and maintaining the pH of intracellular compartments and in some cell types, is targeted to the plasma membrane, where it is responsible for acidifying the extracellular environment. In renal intercalated cells, can partially compensate the lack of ATP6V1B1 and mediate secretion of protons (H+) into the urine under base-line conditions but not in conditions of acid load. The protein is V-type proton ATPase subunit B, brain isoform (ATP6V1B2) of Bos taurus (Bovine).